The chain runs to 450 residues: tRNA modification GTPase MnmE (450 aa).

(6S)-5-formyl-5,6,7,8-tetrahydrofolate is bound by residues Lys-21, Glu-78, and Lys-117. Residues 213-376 (GHALSIIGKP…LSQKISAFFP (164 aa)) enclose the TrmE-type G domain. Asn-223 contributes to the K(+) binding site. Residues 223–228 (NAGKSS), 242–248 (SDIKGTT), and 267–270 (DTAG) contribute to the GTP site. Ser-227 contributes to the Mg(2+) binding site. The K(+) site is built by Ser-242, Ile-244, and Thr-247. Thr-248 contacts Mg(2+). Lys-450 provides a ligand contact to (6S)-5-formyl-5,6,7,8-tetrahydrofolate.

Belongs to the TRAFAC class TrmE-Era-EngA-EngB-Septin-like GTPase superfamily. TrmE GTPase family. As to quaternary structure, homodimer. Heterotetramer of two MnmE and two MnmG subunits. Requires K(+) as cofactor.

Its subcellular location is the cytoplasm. Exhibits a very high intrinsic GTPase hydrolysis rate. Involved in the addition of a carboxymethylaminomethyl (cmnm) group at the wobble position (U34) of certain tRNAs, forming tRNA-cmnm(5)s(2)U34. The polypeptide is tRNA modification GTPase MnmE (Helicobacter acinonychis (strain Sheeba)).